The following is a 146-amino-acid chain: Large-conductance mechanosensitive channel (146 aa).

The next 3 helical transmembrane spans lie at 17-37, 40-60, and 89-109; these read IDLA…DSLV, IIMP…QKFV, and LTIL…VKLI.

It belongs to the MscL family. As to quaternary structure, homopentamer.

It localises to the cell inner membrane. Its function is as follows. Channel that opens in response to stretch forces in the membrane lipid bilayer. May participate in the regulation of osmotic pressure changes within the cell. In Acinetobacter baylyi (strain ATCC 33305 / BD413 / ADP1), this protein is Large-conductance mechanosensitive channel.